Reading from the N-terminus, the 284-residue chain is Pantothenate synthetase (284 aa).

Residue 34-41 (MGALHAGH) participates in ATP binding. Residue H41 is the Proton donor of the active site. Q65 provides a ligand contact to (R)-pantoate. Q65 is a binding site for beta-alanine. ATP is bound at residue 151–154 (GEKD). Q157 is a binding site for (R)-pantoate. ATP-binding positions include L180 and 188–191 (MSSR).

Belongs to the pantothenate synthetase family. In terms of assembly, homodimer.

It is found in the cytoplasm. It catalyses the reaction (R)-pantoate + beta-alanine + ATP = (R)-pantothenate + AMP + diphosphate + H(+). It participates in cofactor biosynthesis; (R)-pantothenate biosynthesis; (R)-pantothenate from (R)-pantoate and beta-alanine: step 1/1. Catalyzes the condensation of pantoate with beta-alanine in an ATP-dependent reaction via a pantoyl-adenylate intermediate. The chain is Pantothenate synthetase from Paramagnetospirillum magneticum (strain ATCC 700264 / AMB-1) (Magnetospirillum magneticum).